A 152-amino-acid chain; its full sequence is MAPKAEKKPAAKKPAEEEPAAEKAEKTPAGKKPKAEKRLPAGKSAAKEGGDKKGKKKAKKSVETYKIYIFKVLKQVHPDIGISSKAMSIMNSFINDIFEKLAGEAAKLARYNKKPTITSREIQTSVRLVLPGELAKHAVSEGTKAVTKFTSS.

Residues 1-28 (MAPKAEKKPAAKKPAEEEPAAEKAEKTP) are compositionally biased toward basic and acidic residues. The interval 1 to 60 (MAPKAEKKPAAKKPAEEEPAAEKAEKTPAGKKPKAEKRLPAGKSAAKEGGDKKGKKKAKK) is disordered. Lysine 7 and lysine 37 each carry N6-acetyllysine. A Glycyl lysine isopeptide (Lys-Gly) (interchain with G-Cter in ubiquitin) cross-link involves residue lysine 148.

It belongs to the histone H2B family. The nucleosome is a histone octamer containing two molecules each of H2A, H2B, H3 and H4 assembled in one H3-H4 heterotetramer and two H2A-H2B heterodimers. The octamer wraps approximately 147 bp of DNA. Post-translationally, can be acetylated to form H2BK6ac and H2BK33ac. Monoubiquitinated to form H2BK143ub1; may give a specific tag for epigenetic transcriptional activation.

The protein resides in the nucleus. It is found in the chromosome. In terms of biological role, core component of nucleosome. Nucleosomes wrap and compact DNA into chromatin, limiting DNA accessibility to the cellular machineries which require DNA as a template. Histones thereby play a central role in transcription regulation, DNA repair, DNA replication and chromosomal stability. DNA accessibility is regulated via a complex set of post-translational modifications of histones, also called histone code, and nucleosome remodeling. This Triticum aestivum (Wheat) protein is Histone H2B.1.